The following is a 171-amino-acid chain: Ribosome maturation factor RimM (171 aa).

Residues 93–167 (DGVYYYKDIF…KVYVELMEGL (75 aa)) form the PRC barrel domain.

It belongs to the RimM family. Binds ribosomal protein uS19.

It localises to the cytoplasm. In terms of biological role, an accessory protein needed during the final step in the assembly of 30S ribosomal subunit, possibly for assembly of the head region. Essential for efficient processing of 16S rRNA. May be needed both before and after RbfA during the maturation of 16S rRNA. It has affinity for free ribosomal 30S subunits but not for 70S ribosomes. This is Ribosome maturation factor RimM from Lactobacillus helveticus (strain DPC 4571).